Consider the following 353-residue polypeptide: Alanine racemase (353 aa).

The Proton acceptor; specific for D-alanine role is filled by lysine 33. Position 33 is an N6-(pyridoxal phosphate)lysine (lysine 33). Arginine 129 provides a ligand contact to substrate. The active-site Proton acceptor; specific for L-alanine is the tyrosine 250. Methionine 298 is a binding site for substrate.

The protein belongs to the alanine racemase family. It depends on pyridoxal 5'-phosphate as a cofactor.

The enzyme catalyses L-alanine = D-alanine. The protein operates within amino-acid biosynthesis; D-alanine biosynthesis; D-alanine from L-alanine: step 1/1. Its function is as follows. Catalyzes the interconversion of L-alanine and D-alanine. May also act on other amino acids. The sequence is that of Alanine racemase (alr) from Azoarcus sp. (strain BH72).